A 429-amino-acid polypeptide reads, in one-letter code: Serine hydroxymethyltransferase (429 aa).

(6S)-5,6,7,8-tetrahydrofolate contacts are provided by residues L126 and 130–132; that span reads GHL. At K235 the chain carries N6-(pyridoxal phosphate)lysine. 359-361 serves as a coordination point for (6S)-5,6,7,8-tetrahydrofolate; sequence SPF.

The protein belongs to the SHMT family. In terms of assembly, homodimer. Pyridoxal 5'-phosphate is required as a cofactor.

Its subcellular location is the cytoplasm. The catalysed reaction is (6R)-5,10-methylene-5,6,7,8-tetrahydrofolate + glycine + H2O = (6S)-5,6,7,8-tetrahydrofolate + L-serine. It participates in one-carbon metabolism; tetrahydrofolate interconversion. It functions in the pathway amino-acid biosynthesis; glycine biosynthesis; glycine from L-serine: step 1/1. In terms of biological role, catalyzes the reversible interconversion of serine and glycine with tetrahydrofolate (THF) serving as the one-carbon carrier. This reaction serves as the major source of one-carbon groups required for the biosynthesis of purines, thymidylate, methionine, and other important biomolecules. Also exhibits THF-independent aldolase activity toward beta-hydroxyamino acids, producing glycine and aldehydes, via a retro-aldol mechanism. The sequence is that of Serine hydroxymethyltransferase from Prochlorococcus marinus (strain MIT 9313).